The chain runs to 328 residues: DNA-directed RNA polymerase subunit alpha (328 aa).

Residues 1–232 (MHNSLAELIK…QHLAILVDLK (232 aa)) form an alpha N-terminal domain (alpha-NTD) region. The alpha C-terminal domain (alpha-CTD) stretch occupies residues 246-328 (FDPLLLHPVD…PPEGLKKLNQ (83 aa)).

This sequence belongs to the RNA polymerase alpha chain family. In terms of assembly, homodimer. The RNAP catalytic core consists of 2 alpha, 1 beta, 1 beta' and 1 omega subunit. When a sigma factor is associated with the core the holoenzyme is formed, which can initiate transcription.

It catalyses the reaction RNA(n) + a ribonucleoside 5'-triphosphate = RNA(n+1) + diphosphate. Functionally, DNA-dependent RNA polymerase catalyzes the transcription of DNA into RNA using the four ribonucleoside triphosphates as substrates. This chain is DNA-directed RNA polymerase subunit alpha, found in Methylococcus capsulatus (strain ATCC 33009 / NCIMB 11132 / Bath).